Reading from the N-terminus, the 71-residue chain is Large ribosomal subunit protein bL31 (71 aa).

4 residues coordinate Zn(2+): C16, C18, C37, and C40.

It belongs to the bacterial ribosomal protein bL31 family. Type A subfamily. In terms of assembly, part of the 50S ribosomal subunit. It depends on Zn(2+) as a cofactor.

In terms of biological role, binds the 23S rRNA. In Solidesulfovibrio magneticus (strain ATCC 700980 / DSM 13731 / RS-1) (Desulfovibrio magneticus), this protein is Large ribosomal subunit protein bL31.